Consider the following 894-residue polypeptide: Interleukin enhancer-binding factor 3 (894 aa).

One can recognise a DZF domain in the interval 5-378 (RIFVNDDRHV…PMKRPMEEDG (374 aa)). Positions 50–86 (DEQEKGSSEQAESDNMDVPPEDDSKEGAGEQKTEHMT) are disordered. Residues 60–73 (AESDNMDVPPEDDS) show a composition bias toward acidic residues. S62 is modified (phosphoserine). Basic and acidic residues predominate over residues 74–86 (KEGAGEQKTEHMT). Position 100 is an N6-acetyllysine (K100). T188 bears the Phosphothreonine; by PKR mark. The residue at position 190 (S190) is a Phosphoserine. K297 participates in a covalent cross-link: Glycyl lysine isopeptide (Lys-Gly) (interchain with G-Cter in ubiquitin). Position 315 is a phosphothreonine; by PKR (T315). K348 is covalently cross-linked (Glycyl lysine isopeptide (Lys-Gly) (interchain with G-Cter in SUMO1)). Residues 363-401 (TTYAITPMKRPMEEDGEEKSPSKKKKKIQKKEEKAEPPQ) form a disordered region. The short motif at 371–389 (KRPMEEDGEEKSPSKKKKK) is the Bipartite nuclear localization signal element. Positions 372 to 383 (RPMEEDGEEKSP) are enriched in basic and acidic residues. S382 and S384 each carry phosphoserine. Residue K396 forms a Glycyl lysine isopeptide (Lys-Gly) (interchain with G-Cter in SUMO2) linkage. Residues 398-467 (EPPQAMNALM…AVKVLQDMGL (70 aa)) enclose the DRBM 1 domain. Residue K460 is modified to N6-acetyllysine. The tract at residues 466–524 (GLPTGAEGRDSSKGEDSAEETEAKPAVVAPAPVVEAVSTPSAAFPSDATAEQGPILTKH) is disordered. The span at 472-481 (EGRDSSKGED) shows a compositional bias: basic and acidic residues. A phosphoserine mark is found at S476, S477, and S482. K489 participates in a covalent cross-link: Glycyl lysine isopeptide (Lys-Gly) (interchain with G-Cter in SUMO2). The segment covering 489-508 (KPAVVAPAPVVEAVSTPSAA) has biased composition (low complexity). Positions 524-590 (HGKNPVMELN…ALAALEKLFP (67 aa)) constitute a DRBM 2 domain. A Phosphothreonine modification is found at T592. An interaction with PRMT1 region spans residues 609 to 894 (RGGPKFAAKP…ADHSMNYQYR (286 aa)). Disordered regions lie at residues 625-660 (MGGP…FGGA) and 718-894 (QGDN…YQYR). Residues 644–660 (RGGSIRGRGRGRGFGGA) show a composition bias toward gly residues. Low complexity-rich tracts occupy residues 743-770 (PSYG…YGPP) and 777-792 (YNHG…SYNS). S792, S810, S812, and S816 each carry phosphoserine. Gly residues-rich tracts occupy residues 811-825 (GSGG…GSGG) and 832-851 (SHGG…GKQG). A compositionally biased stretch (polar residues) spans 857 to 866 (NYNSPGSGQN). Low complexity predominate over residues 867 to 878 (YSGPPSSYQSSQ).

As to quaternary structure, identified in a IGF2BP1-dependent mRNP granule complex containing untranslated mRNAs. Interacts with FUS and SMN. Interacts (via C-terminus) with PRMT1. Forms a complex with ILF2. Can also bind to PRKDC/XRCC7: this may stabilize the interaction of PRKDC/XRCC7 and the heterodimeric complex of XRCC6/KU70 and XRCC5/KU80. Forms a heteromeric complex with ZNF346 and ILF3. Found in a nuclear export complex with XPO5, ILF3, Ran and double-stranded RNA or double-stranded minihelix VA1 RNA. Found in a nuclear export complex with XPO5, RAN, ILF3, ZNF346 and double-stranded RNA. Interacts with XPO5 and ZNF346. Forms a complex with ILF2, YLPM1, KHDRBS1, RBMX, NCOA5 and PPP1CA. Interacts with AGO1 and AGO2. Interacts with DHX36; this interaction occurs in a RNA-dependent manner. Interacts with ELAVL1; this interaction occurs in a RNA-dependent manner. Interacts with HAVCR2; this interaction promotes ILF3 ubiquitination and subsequent degradation. Post-translationally, phosphorylated at Thr-188 and Thr-315 by PKR in response to certain RNA viruses. This phosphorylation results in the dissociation of ILF2 from the ILF2-ILF3 complex resulting in a cytoplasmic sequestration of ILF3 where it can bind to viral RNAs and impede viral replication. Methylated by protein arginine N-methyltransferase 1. In terms of processing, ubiquitinated at Lys-297 in a TRIM47-dependent manner; this 'Lys-48'-linked ubiquitination promotes ILF3 degradation. In terms of tissue distribution, ubiquitous.

The protein resides in the nucleus. It is found in the nucleolus. It localises to the cytoplasm. In terms of biological role, RNA-binding protein that plays an essential role in the biogenesis of circular RNAs (circRNAs) which are produced by back-splicing circularization of pre-mRNAs. Within the nucleus, promotes circRNAs processing by stabilizing the regulatory elements residing in the flanking introns of the circularized exons. Plays thereby a role in the back-splicing of a subset of circRNAs. As a consequence, participates in a wide range of transcriptional and post-transcriptional processes. Binds to poly-U elements and AU-rich elements (AREs) in the 3'-UTR of target mRNAs. Upon viral infection, ILF3 accumulates in the cytoplasm and participates in the innate antiviral response. Mechanistically, ILF3 becomes phosphorylated and activated by the double-stranded RNA-activated protein kinase/PKR which releases ILF3 from cellular mature circRNAs. In turn, unbound ILF3 molecules are able to interact with and thus inhibit viral mRNAs. Functionally, (Microbial infection) Plays a positive role in HIV-1 virus production by binding to and thereby stabilizing HIV-1 RNA, together with ILF3. In Homo sapiens (Human), this protein is Interleukin enhancer-binding factor 3 (ILF3).